Here is a 502-residue protein sequence, read N- to C-terminus: Lysine--tRNA ligase (502 aa).

Mg(2+)-binding residues include Glu-403 and Glu-410.

This sequence belongs to the class-II aminoacyl-tRNA synthetase family. As to quaternary structure, homodimer. Mg(2+) serves as cofactor.

It localises to the cytoplasm. The enzyme catalyses tRNA(Lys) + L-lysine + ATP = L-lysyl-tRNA(Lys) + AMP + diphosphate. This chain is Lysine--tRNA ligase, found in Synechococcus sp. (strain CC9605).